Here is a 400-residue protein sequence, read N- to C-terminus: Lysophospholipid transporter LplT (400 aa).

12 helical membrane-spanning segments follow: residues 19–39 (VIVA…ATLA), 53–73 (VLQM…GQMA), 91–111 (AGAA…LVGI), 139–159 (LMEA…GVLA), 164–184 (IAAL…NLFI), 195–213 (SWRL…VVLW), 227–247 (LFWG…PVAL), 257–277 (YLNA…AKLV), 281–301 (TVSR…IFSL), 304–324 (ALLP…FFVV), 352–372 (NSAM…GVPA), and 373–393 (VAIG…LWIW).

The protein belongs to the major facilitator superfamily. LplT (TC 2.A.1.42) family.

It localises to the cell inner membrane. In terms of biological role, catalyzes the facilitated diffusion of 2-acyl-glycero-3-phosphoethanolamine (2-acyl-GPE) into the cell. In Salmonella enteritidis PT4 (strain P125109), this protein is Lysophospholipid transporter LplT.